We begin with the raw amino-acid sequence, 597 residues long: MVLKRVRCYYLIITIRLKMKVFTNKNLSIEQYGFINTFPNQNYILSYLHPYNPYSSLIVCYDVGLGKTYAAACLAHMYLDSGFKVLYLSNSLNSIDNFSNEYEKVVLDSRLNSLKKNITIKSFSKFYNCEKRGESDNVDYGLIILDEVHNLRESAYRYKLIKNKLDTMNNSKILVITATPMIDSKDELDSILSLTKETSRIIFSENKIDIKISYVGQEINGETLFLSEMKGQQLKEYLKVVNEENDTVYSSSRQASISLSNKFNPSIPLDEQSSKINAFINSIKEGELTVLFSFYVKRGIDFTSSVLESIGYKKWNSNKKQKRTYAVIDGRTNKKNVEEILTSFNSIANIKGDNIHILLGSSVLSESITLYRVKHLHIISPFWNYGQIKQSIGRAIRIGSHEGLEDKSMKVYLHAAHYDKEGKDIDIWKIAYDKNKDIIKRLEELKIDNEFSNDSLLDIPKIDNEMVIKINEWVWDFRNCFDTNKFKISWCKIYEDKAIGYNLENNTKIMGNIPSYIRINRPIPGGYTIWRSCIDKKLRISFIDGEVNKFSKRGKLISNVNTSEIAKDLNCENNIESIINTLKEQNRYFDKQIEYDL.

The 151-residue stretch at 48–198 folds into the Helicase ATP-binding domain; sequence LHPYNPYSSL…DSILSLTKET (151 aa). An ATP-binding site is contributed by 61-68; the sequence is YDVGLGKT. Positions 146-149 match the DEVH box motif; it reads DEVH. In terms of domain architecture, Helicase C-terminal spans 275 to 467; sequence KINAFINSIK…DIPKIDNEMV (193 aa).

The protein belongs to the helicase family.

In terms of biological role, the presence of the two linear plasmids, termed pGKL1 and pGKL2, in strains of Kluyveromyces lactis confers the killer phenotype to the host cell, by promoting the secretion of a toxin able to inhibit the growth of sensitive strains. This is an uncharacterized protein from Kluyveromyces lactis (strain ATCC 8585 / CBS 2359 / DSM 70799 / NBRC 1267 / NRRL Y-1140 / WM37) (Yeast).